The chain runs to 178 residues: Extracellular fatty acid-binding protein (178 aa).

A signal peptide spans 1–20; it reads MRTLALSLGLALLCLLHAKA. Residue Thr-43 coordinates enterobactin. Tyr-72 and Lys-104 together coordinate 1-tetradecanoyl-sn-glycerol 3-phosphate. A disulfide bridge links Cys-80 with Cys-173. Residues Lys-104, Arg-123, and Arg-134 each coordinate enterobactin. 134–136 contributes to the 1-tetradecanoyl-sn-glycerol 3-phosphate binding site; that stretch reads RLY.

Belongs to the calycin superfamily. Lipocalin family. Monomer.

It is found in the secreted. Its function is as follows. Siderocalin-like lipocalin tightly binding a variety of bacterial ferric siderophores, also binds long-chain unsaturated fatty acids such as linoleic acid, oleic acid, arachidonic acid and, with a lower affinity, long chain saturated fatty acids such as steraic acid. May act as an antibacterial factor, through dual ligand specificity, both as a siderophore-sequestrating molecule and a lysophosphatidic acid (LPA) sensor. The sequence is that of Extracellular fatty acid-binding protein from Coturnix japonica (Japanese quail).